Consider the following 912-residue polypeptide: Probable dipeptidyl-aminopeptidase B (912 aa).

2 disordered regions span residues 1–30 (MAAEKGGSSDEERKPLTRGSMEYRDSSNSL) and 48–68 (NGSTHDTGPDEIGRGDRDYSD). Residues 1–92 (MAAEKGGSSD…GGKPVQKKVK (92 aa)) lie on the Cytoplasmic side of the membrane. Composition is skewed to basic and acidic residues over residues 7–25 (GSSDEERKPLTRGSMEYRD) and 54–67 (TGPDEIGRGDRDYS). The helical; Signal-anchor for type II membrane protein transmembrane segment at 93-113 (IVLGFLLFLCLSGWSLAFVLF) threads the bilayer. At 114–912 (LFGGHESSKT…RAATWVGMSI (799 aa)) the chain is on the vacuolar side. 5 N-linked (GlcNAc...) asparagine glycosylation sites follow: Asn130, Asn210, Asn346, Asn569, and Asn656. The Charge relay system role is filled by Ser751. The N-linked (GlcNAc...) asparagine glycan is linked to Asn810. Catalysis depends on charge relay system residues Asp828 and His861. The N-linked (GlcNAc...) asparagine glycan is linked to Asn897.

The protein belongs to the peptidase S9B family.

The protein localises to the vacuole membrane. It carries out the reaction Release of an N-terminal dipeptide, Xaa-Yaa-|-Zaa-, from a polypeptide, preferentially when Yaa is Pro, provided Zaa is neither Pro nor hydroxyproline.. Its function is as follows. Type IV dipeptidyl-peptidase which removes N-terminal dipeptides sequentially from polypeptides having unsubstituted N-termini provided that the penultimate residue is proline. The protein is Probable dipeptidyl-aminopeptidase B (DAPB) of Paracoccidioides brasiliensis (strain Pb18).